Consider the following 182-residue polypeptide: ATP-dependent protease subunit HslV (182 aa).

Threonine 12 is a catalytic residue. Residues alanine 167, cysteine 170, and threonine 173 each contribute to the Na(+) site.

Belongs to the peptidase T1B family. HslV subfamily. In terms of assembly, a double ring-shaped homohexamer of HslV is capped on each side by a ring-shaped HslU homohexamer. The assembly of the HslU/HslV complex is dependent on binding of ATP.

The protein localises to the cytoplasm. It catalyses the reaction ATP-dependent cleavage of peptide bonds with broad specificity.. Allosterically activated by HslU binding. Its function is as follows. Protease subunit of a proteasome-like degradation complex believed to be a general protein degrading machinery. The protein is ATP-dependent protease subunit HslV of Chlorobium chlorochromatii (strain CaD3).